A 369-amino-acid chain; its full sequence is UPF0284 protein AM1_5137 (369 aa).

The protein belongs to the UPF0284 family.

The sequence is that of UPF0284 protein AM1_5137 from Acaryochloris marina (strain MBIC 11017).